Reading from the N-terminus, the 896-residue chain is Alanine--tRNA ligase (896 aa).

4 residues coordinate Zn(2+): histidine 599, histidine 603, cysteine 707, and histidine 711.

It belongs to the class-II aminoacyl-tRNA synthetase family. Zn(2+) serves as cofactor.

The protein resides in the cytoplasm. It catalyses the reaction tRNA(Ala) + L-alanine + ATP = L-alanyl-tRNA(Ala) + AMP + diphosphate. Catalyzes the attachment of alanine to tRNA(Ala) in a two-step reaction: alanine is first activated by ATP to form Ala-AMP and then transferred to the acceptor end of tRNA(Ala). Also edits incorrectly charged Ser-tRNA(Ala) and Gly-tRNA(Ala) via its editing domain. The sequence is that of Alanine--tRNA ligase from Pyrobaculum calidifontis (strain DSM 21063 / JCM 11548 / VA1).